Consider the following 395-residue polypeptide: Argininosuccinate synthase (395 aa).

An ATP-binding site is contributed by 8 to 16 (AYSGGLDTS). Tyrosine 86 lines the L-citrulline pocket. An ATP-binding site is contributed by glycine 116. The L-aspartate site is built by threonine 118, asparagine 122, and aspartate 123. Asparagine 122 serves as a coordination point for L-citrulline. Arginine 126, serine 173, serine 182, glutamate 257, and tyrosine 269 together coordinate L-citrulline.

Belongs to the argininosuccinate synthase family. Type 1 subfamily. In terms of assembly, homotetramer.

The protein resides in the cytoplasm. The catalysed reaction is L-citrulline + L-aspartate + ATP = 2-(N(omega)-L-arginino)succinate + AMP + diphosphate + H(+). It participates in amino-acid biosynthesis; L-arginine biosynthesis; L-arginine from L-ornithine and carbamoyl phosphate: step 2/3. The chain is Argininosuccinate synthase from Methanocaldococcus jannaschii (strain ATCC 43067 / DSM 2661 / JAL-1 / JCM 10045 / NBRC 100440) (Methanococcus jannaschii).